The primary structure comprises 83 residues: Pigment-dispersing hormone peptides (83 aa).

Positions 1–24 are cleaved as a signal peptide; sequence MRFIILGVLFIAVASMILSNGVMA. Ala80 carries the alanine amide modification.

The protein belongs to the arthropod PDH family. In terms of tissue distribution, strongly expressed in eyestalk tissue and cerebral ganglia (at protein level).

The protein resides in the secreted. The pigment-dispersing hormone causes the migration of the distal retinal pigment into the proximal end of the pigment chromatophore cells and thus decreases the amount of light entering the retinulas. May also function as a neurotransmitter and/or neuromodulator. In Eurydice pulchra (Speckled sea louse), this protein is Pigment-dispersing hormone peptides.